A 422-amino-acid chain; its full sequence is Putative FBD-associated F-box protein At1g55030 (422 aa).

The 53-residue stretch at 8–60 (TDMISQLPEPLILQILGSLPTKVAITTSVLSKQWQSHWKMMPKLEFDSFLRRL) folds into the F-box domain. 3 LRR repeats span residues 132 to 153 (TLET…VYLK), 154 to 175 (SLKT…INLL), and 180 to 201 (NLQD…TIAV). The 50-residue stretch at 342 to 391 (EWNQPKNVPECLHHLEKFIWEGYKWKREEIEVAKYILKNTNRLKRAIFSL) folds into the FBD domain.

The polypeptide is Putative FBD-associated F-box protein At1g55030 (Arabidopsis thaliana (Mouse-ear cress)).